Consider the following 406-residue polypeptide: Putative competence-damage inducible protein (406 aa).

It belongs to the CinA family.

The protein is Putative competence-damage inducible protein of Natranaerobius thermophilus (strain ATCC BAA-1301 / DSM 18059 / JW/NM-WN-LF).